Here is a 548-residue protein sequence, read N- to C-terminus: Probable malate:quinone oxidoreductase (548 aa).

The segment at 520-548 (YDRPQAADSTPKPQLKPQPVQKEVADIAL) is disordered. A compositionally biased stretch (low complexity) spans 530–541 (PKPQLKPQPVQK).

Belongs to the MQO family. FAD serves as cofactor.

The enzyme catalyses (S)-malate + a quinone = a quinol + oxaloacetate. It functions in the pathway carbohydrate metabolism; tricarboxylic acid cycle; oxaloacetate from (S)-malate (quinone route): step 1/1. The chain is Probable malate:quinone oxidoreductase from Shigella dysenteriae serotype 1 (strain Sd197).